A 1104-amino-acid polypeptide reads, in one-letter code: Isoleucine--tRNA ligase (1104 aa).

The 'HIGH' region motif lies at 48–58; sequence PYTTGRIHLGT. The short motif at 644 to 648 is the 'KMSKS' region element; sequence KMSKS. K647 provides a ligand contact to ATP.

It belongs to the class-I aminoacyl-tRNA synthetase family. IleS type 2 subfamily. Monomer. Zn(2+) serves as cofactor.

It is found in the cytoplasm. The enzyme catalyses tRNA(Ile) + L-isoleucine + ATP = L-isoleucyl-tRNA(Ile) + AMP + diphosphate. Its function is as follows. Catalyzes the attachment of isoleucine to tRNA(Ile). As IleRS can inadvertently accommodate and process structurally similar amino acids such as valine, to avoid such errors it has two additional distinct tRNA(Ile)-dependent editing activities. One activity is designated as 'pretransfer' editing and involves the hydrolysis of activated Val-AMP. The other activity is designated 'posttransfer' editing and involves deacylation of mischarged Val-tRNA(Ile). The polypeptide is Isoleucine--tRNA ligase (Methanocella arvoryzae (strain DSM 22066 / NBRC 105507 / MRE50)).